We begin with the raw amino-acid sequence, 131 residues long: L-ectoine synthase (131 aa).

This sequence belongs to the ectoine synthase family.

It catalyses the reaction (2S)-4-acetamido-2-aminobutanoate = L-ectoine + H2O. Its pathway is amine and polyamine biosynthesis; ectoine biosynthesis; L-ectoine from L-aspartate 4-semialdehyde: step 3/3. Catalyzes the circularization of gamma-N-acetyl-alpha,gamma-diaminobutyric acid (ADABA) to ectoine (1,4,5,6-tetrahydro-2-methyl-4-pyrimidine carboxylic acid), which is an excellent osmoprotectant. The sequence is that of L-ectoine synthase from Bordetella bronchiseptica (strain ATCC BAA-588 / NCTC 13252 / RB50) (Alcaligenes bronchisepticus).